The primary structure comprises 331 residues: RDEVVRGRDVVISTHTHDDLGMATANALAGVENGAGQIECTINGIGERAGNCALEEVVMALYVRRDWYKAYTRINTREIYRVSRLVERYTGMPVPPNKAIVGDNAFAHESGIHQDGVIKHRATYEIMDAELIGRRPAVLVLGKHSGRAAFKKALEDLGYKDLSEEEVKKLFARFKEIAEKKGPLSAEELQALVESEREPTSHFFQLEHVQFFSGSGLLPTATVKVKTPDGERLATHTGDGPVDAVYKAIQEAIGLRPELELYRVEAITGSTEALGQVTVRLRLGELQAVGVGVSPDIIEASALAFLDAAGKLASGRATRHPPSIEEVHRGV.

The Pyruvate carboxyltransferase domain maps to 1 to 80 (RDEVVRGRDV…YTRINTREIY (80 aa)). Mn(2+)-binding residues include H15, H17, and N51. Residues 205–331 (QLEHVQFFSG…PSIEEVHRGV (127 aa)) form a regulatory domain region.

This sequence belongs to the alpha-IPM synthase/homocitrate synthase family. LeuA type 1 subfamily. Homotetramer. Requires Mn(2+) as cofactor.

It localises to the cytoplasm. It catalyses the reaction 3-methyl-2-oxobutanoate + acetyl-CoA + H2O = (2S)-2-isopropylmalate + CoA + H(+). The protein operates within amino-acid biosynthesis; L-leucine biosynthesis; L-leucine from 3-methyl-2-oxobutanoate: step 1/4. Its function is as follows. Catalyzes the condensation of the acetyl group of acetyl-CoA with 3-methyl-2-oxobutanoate (2-oxoisovalerate) to form 3-carboxy-3-hydroxy-4-methylpentanoate (2-isopropylmalate). The sequence is that of 2-isopropylmalate synthase from Thermus thermophilus.